The chain runs to 287 residues: Pantothenate synthetase (287 aa).

30 to 37 (MGNLHSGH) provides a ligand contact to ATP. His37 serves as the catalytic Proton donor. Residue Gln61 participates in (R)-pantoate binding. Gln61 serves as a coordination point for beta-alanine. 149 to 152 (GEKD) serves as a coordination point for ATP. Gln155 contacts (R)-pantoate. Residues Val178 and 186–189 (LSSR) contribute to the ATP site.

It belongs to the pantothenate synthetase family. As to quaternary structure, homodimer.

The protein resides in the cytoplasm. The enzyme catalyses (R)-pantoate + beta-alanine + ATP = (R)-pantothenate + AMP + diphosphate + H(+). Its pathway is cofactor biosynthesis; (R)-pantothenate biosynthesis; (R)-pantothenate from (R)-pantoate and beta-alanine: step 1/1. Catalyzes the condensation of pantoate with beta-alanine in an ATP-dependent reaction via a pantoyl-adenylate intermediate. The polypeptide is Pantothenate synthetase (Pseudomonas entomophila (strain L48)).